The chain runs to 354 residues: C-C chemokine receptor type 5 (354 aa).

Residues 1–32 (MDFQGSIPTYIYDIDYSMSAPCQKVNVKQIAA) lie on the Extracellular side of the membrane. S6 carries an O-linked (GalNAc...) serine glycan. Y10 and Y16 each carry sulfotyrosine. Disulfide bonds link C22–C271 and C103–C180. The helical transmembrane segment at 33–60 (QLLPPLYSLVFIFGFVGNMMVFLILISC) threads the bilayer. The Cytoplasmic segment spans residues 61–70 (KKLKSMTDIY). A helical transmembrane segment spans residues 71–91 (LFNLAISDLLFLLTLPFWAHY). Topologically, residues 92 to 104 (AANEWVFGNIMCK) are extracellular. A helical transmembrane segment spans residues 105-126 (LFTGIYHIGYFGGIFFIILLTI). At 127 to 143 (DRYLAIVHAVFAIKART) the chain is on the cytoplasmic side. The chain crosses the membrane as a helical span at residues 144–168 (VNFGVITSVVTWVVAVFVSLPEIIF). Over 169-200 (MRSQKEGSHYTCSPHFLHIQYRFWKHFQTLKM) the chain is Extracellular. Residues 201–220 (VILSLILPLLVMVICYSGIL) traverse the membrane as a helical segment. Residues 221 to 237 (NTLFRCRNEKKRHRAVR) are Cytoplasmic-facing. Residues 238 to 262 (LIFAIMIVYFLFWTPYNIVLLLTTF) form a helical membrane-spanning segment. Over 263 to 279 (QEYFGLNNCSSSNRLDQ) the chain is Extracellular. The helical transmembrane segment at 280–303 (AMQVTETLGMTHCCLNPVIYAFVG) threads the bilayer. Over 304-354 (EKFRNYLSVFFRKHIVKRFCKHCSIFQQVNPDRVSSVYTRSTGEQEVSTGL) the chain is Cytoplasmic. S-palmitoyl cysteine attachment occurs at residues C323 and C326. 4 positions are modified to phosphoserine; by BARK1: S338, S339, S344, and S351.

This sequence belongs to the G-protein coupled receptor 1 family. Interacts with PRAF2. Efficient ligand binding to CCL3/MIP-1alpha and CCL4/MIP-1beta requires sulfation, O-glycosylation and sialic acid modifications. Glycosylation on Ser-6 is required for efficient binding of CCL4. Interacts with GRK2. Interacts with ARRB1 and ARRB2. Interacts with CNIH4. Interacts with S100A4; this interaction stimulates T-lymphocyte chemotaxis. Sulfated on at least 2 of the N-terminal tyrosines. Sulfation is required for efficient binding of the chemokines, CCL3 and CCL4. Post-translationally, O-glycosylated, but not N-glycosylated. Ser-6 appears to be the major site. Also sialylated glycans present which contribute to chemokine binding. Ser-17 may also be glycosylated and, if so, with small moieties such as a T-antigen. In terms of processing, palmitoylation in the C-terminal is important for cell surface expression. Phosphorylation on serine residues in the C-terminal is stimulated by binding CC chemokines especially by APO-RANTES.

The protein localises to the cell membrane. Functionally, receptor for a number of inflammatory CC-chemokines including CCL3/MIP-1-alpha, CCL4/MIP-1-beta and RANTES and subsequently transduces a signal by increasing the intracellular calcium ion level. May play a role in the control of granulocytic lineage proliferation or differentiation. Participates in T-lymphocyte migration to the infection site by acting as a chemotactic receptor. The sequence is that of C-C chemokine receptor type 5 (Ccr5) from Rattus norvegicus (Rat).